Here is a 352-residue protein sequence, read N- to C-terminus: Histidinol-phosphate aminotransferase 1 (352 aa).

Lys211 is subject to N6-(pyridoxal phosphate)lysine.

This sequence belongs to the class-II pyridoxal-phosphate-dependent aminotransferase family. Histidinol-phosphate aminotransferase subfamily. As to quaternary structure, homodimer. It depends on pyridoxal 5'-phosphate as a cofactor.

The enzyme catalyses L-histidinol phosphate + 2-oxoglutarate = 3-(imidazol-4-yl)-2-oxopropyl phosphate + L-glutamate. Its pathway is amino-acid biosynthesis; L-histidine biosynthesis; L-histidine from 5-phospho-alpha-D-ribose 1-diphosphate: step 7/9. The chain is Histidinol-phosphate aminotransferase 1 from Haemophilus influenzae (strain 86-028NP).